Reading from the N-terminus, the 205-residue chain is Bacterial microcompartment protein trimer-1 (205 aa).

Residues 1–20 are disordered; that stretch reads MDHAPERFDATPPAGEPDRP. 2 BMC domains span residues 21–106 and 120–204; these read ALGV…RFLD and SVII…GRLF.

This sequence belongs to the bacterial microcompartments protein family. As to quaternary structure, homotrimerizes to form a pseudohexamer. Unlike its paralogs BMC-T2 and BMC-T3, the pseudohexamers do not stack. The concave side faces outward, with the N- and C-terminii exposed to the cytoplasm.

The protein resides in the bacterial microcompartment. Its function is as follows. A minor component of the bacterial microcompartment (BMC) shell. Expression of 5 proteins in E.coli (BMC-H (Hoch_5815), BMC-P (Hoch_5814), and 3 BMC-T (Hoch_5812, Hoch_5816, Hoch_3341)) forms 40 nm artificial BMCs with a molecular mass of 6.5 MDa. This protein does not form stacked pseudohexamers in the BMC. There are 20 BMC-T pseudohexamers per BMC, composed of mixed BMC-T1, BMC-T2 and BMC-T3. The shell facets are 20-30 Angstroms thick, with 1 of BMC-T trimers protruding to the exterior. In Haliangium ochraceum (strain DSM 14365 / JCM 11303 / SMP-2), this protein is Bacterial microcompartment protein trimer-1.